A 275-amino-acid polypeptide reads, in one-letter code: Proteasome subunit beta (275 aa).

Positions 1–52 (MQDTTANQVAANATSSFTEHLQRNRPGLLPYNQPFPAALTGAGSQPLQVPHA) are cleaved as a propeptide — removed in mature form; by autocatalysis. Thr-53 functions as the Nucleophile in the catalytic mechanism.

Belongs to the peptidase T1B family. The 20S proteasome core is composed of 14 alpha and 14 beta subunits that assemble into four stacked heptameric rings, resulting in a barrel-shaped structure. The two inner rings, each composed of seven catalytic beta subunits, are sandwiched by two outer rings, each composed of seven alpha subunits. The catalytic chamber with the active sites is on the inside of the barrel. Has a gated structure, the ends of the cylinder being occluded by the N-termini of the alpha-subunits. Is capped by the proteasome-associated ATPase, ARC.

It is found in the cytoplasm. It carries out the reaction Cleavage of peptide bonds with very broad specificity.. Its pathway is protein degradation; proteasomal Pup-dependent pathway. With respect to regulation, the formation of the proteasomal ATPase ARC-20S proteasome complex, likely via the docking of the C-termini of ARC into the intersubunit pockets in the alpha-rings, may trigger opening of the gate for substrate entry. Interconversion between the open-gate and close-gate conformations leads to a dynamic regulation of the 20S proteasome proteolysis activity. In terms of biological role, component of the proteasome core, a large protease complex with broad specificity involved in protein degradation. The polypeptide is Proteasome subunit beta (Arthrobacter sp. (strain FB24)).